The sequence spans 221 residues: Enolase-phosphatase E1 (221 aa).

Belongs to the HAD-like hydrolase superfamily. MasA/MtnC family. In terms of assembly, monomer. Mg(2+) is required as a cofactor.

It catalyses the reaction 5-methylsulfanyl-2,3-dioxopentyl phosphate + H2O = 1,2-dihydroxy-5-(methylsulfanyl)pent-1-en-3-one + phosphate. Its pathway is amino-acid biosynthesis; L-methionine biosynthesis via salvage pathway; L-methionine from S-methyl-5-thio-alpha-D-ribose 1-phosphate: step 3/6. The protein operates within amino-acid biosynthesis; L-methionine biosynthesis via salvage pathway; L-methionine from S-methyl-5-thio-alpha-D-ribose 1-phosphate: step 4/6. In terms of biological role, bifunctional enzyme that catalyzes the enolization of 2,3-diketo-5-methylthiopentyl-1-phosphate (DK-MTP-1-P) into the intermediate 2-hydroxy-3-keto-5-methylthiopentenyl-1-phosphate (HK-MTPenyl-1-P), which is then dephosphorylated to form the acireductone 1,2-dihydroxy-3-keto-5-methylthiopentene (DHK-MTPene). This is Enolase-phosphatase E1 from Xanthobacter autotrophicus (strain ATCC BAA-1158 / Py2).